The sequence spans 95 residues: Aspartyl/glutamyl-tRNA(Asn/Gln) amidotransferase subunit C (95 aa).

It belongs to the GatC family. Heterotrimer of A, B and C subunits.

The catalysed reaction is L-glutamyl-tRNA(Gln) + L-glutamine + ATP + H2O = L-glutaminyl-tRNA(Gln) + L-glutamate + ADP + phosphate + H(+). It carries out the reaction L-aspartyl-tRNA(Asn) + L-glutamine + ATP + H2O = L-asparaginyl-tRNA(Asn) + L-glutamate + ADP + phosphate + 2 H(+). Its function is as follows. Allows the formation of correctly charged Asn-tRNA(Asn) or Gln-tRNA(Gln) through the transamidation of misacylated Asp-tRNA(Asn) or Glu-tRNA(Gln) in organisms which lack either or both of asparaginyl-tRNA or glutaminyl-tRNA synthetases. The reaction takes place in the presence of glutamine and ATP through an activated phospho-Asp-tRNA(Asn) or phospho-Glu-tRNA(Gln). The protein is Aspartyl/glutamyl-tRNA(Asn/Gln) amidotransferase subunit C of Citrifermentans bemidjiense (strain ATCC BAA-1014 / DSM 16622 / JCM 12645 / Bem) (Geobacter bemidjiensis).